The sequence spans 664 residues: Protein LYK5 (664 aa).

Residues 1 to 26 (MAACTLHALSVTLFLLLFFAVSPAKA) form the signal peptide. Residues 27 to 277 (QQPYVNNHQL…DPPGSSSSHK (251 aa)) are Extracellular-facing. Residues N45, N81, N111, N125, and N129 are each glycosylated (N-linked (GlcNAc...) asparagine). 3 disulfides stabilise this stretch: C52/C114, C58/C181, and C112/C179. Residue 135–141 (GDETYFS) participates in chitin binding. N144 carries an N-linked (GlcNAc...) asparagine glycan. Residue 164-170 (ERQLTPG) participates in chitin binding. One can recognise a LysM domain in the interval 195 to 238 (LTYLVAMGDSISGIAEMFNSTSAAITEGNELTSDNIFFFTPVLV). N213 is a glycosylation site (N-linked (GlcNAc...) asparagine). Pro residues predominate over residues 251–269 (PSPPPPPVVATPPQTPVDP). The disordered stretch occupies residues 251–270 (PSPPPPPVVATPPQTPVDPP). A helical transmembrane segment spans residues 278 to 298 (WIYIGIGIGAGLLLLLSILAL). Residues 299–664 (CFYKRRSKKK…DLLRSGSLGN (366 aa)) lie on the Cytoplasmic side of the membrane. The Protein kinase domain occupies 351–643 (KSAIESLTLY…TQVLTTLSMI (293 aa)). Residues 357-365 (LTLYRFNDL) and K395 contribute to the ATP site.

It belongs to the protein kinase superfamily. Ser/Thr protein kinase family.

It localises to the cell membrane. Its function is as follows. May recognize microbe-derived N-acetylglucosamine (NAG)-containing ligands. The chain is Protein LYK5 (LYK5) from Arabidopsis thaliana (Mouse-ear cress).